The sequence spans 27 residues: Kunitz-type serine protease inhibitor 3 (27 aa).

Residues 1–27 enclose the BPTI/Kunitz inhibitor domain; the sequence is EVHNFACLGKPDPGGCAHYIYRRYYYV.

The protein localises to the secreted. Its function is as follows. Inhibits bovine trypsin and human neutrophil elastase. The chain is Kunitz-type serine protease inhibitor 3 from Rhipicephalus microplus (Cattle tick).